The primary structure comprises 177 residues: CASP-like protein 4D1 (177 aa).

Residues 1 to 20 (MTAPTAPSMAAPPAPSMVSR) are Cytoplasmic-facing. Residues 21–41 (MTALFLRVLTFAFLMVSLVIM) traverse the membrane as a helical segment. Over 42–66 (TTNTGTIEIGIDEFKVRSKDFYSYR) the chain is Extracellular. The chain crosses the membrane as a helical span at residues 67-87 (YMLAAIAFGLTYTILQIALTL). Residues 88–107 (NHISKRNGAQTSGDGNLVFD) lie on the Cytoplasmic side of the membrane. The chain crosses the membrane as a helical span at residues 108–128 (FYGDKVVSYILATGAAAAFGA). Residues 129–153 (TKELKTQLAGLGGDKFFNKGYASAS) lie on the Extracellular side of the membrane. The helical transmembrane segment at 154-174 (LLLLGFVCTAILSVFSSYALP) threads the bilayer. Residues 175-177 (KKV) are Cytoplasmic-facing.

This sequence belongs to the Casparian strip membrane proteins (CASP) family. In terms of assembly, homodimer and heterodimers.

It localises to the cell membrane. The sequence is that of CASP-like protein 4D1 from Populus trichocarpa (Western balsam poplar).